Consider the following 558-residue polypeptide: Tyrosine N-monooxygenase (558 aa).

A helical membrane pass occupies residues 13–33; the sequence is VLAAPLLSSSAILKLLLFVVT. The segment at 48–67 is disordered; the sequence is TTKCSSTTCASPPAGVGNPP. The segment covering 49 to 65 has biased composition (low complexity); the sequence is TKCSSTTCASPPAGVGN. Positions 138, 167, 422, 491, and 493 each coordinate heme b.

The protein belongs to the cytochrome P450 family. Requires heme b as cofactor.

The protein localises to the endoplasmic reticulum membrane. The catalysed reaction is L-tyrosine + 2 reduced [NADPH--hemoprotein reductase] + 2 O2 = (E)-4-hydroxyphenylacetaldehyde oxime + 2 oxidized [NADPH--hemoprotein reductase] + CO2 + 3 H2O + 2 H(+). The enzyme catalyses L-tyrosine + reduced [NADPH--hemoprotein reductase] + O2 = N-hydroxy-L-tyrosine + oxidized [NADPH--hemoprotein reductase] + H2O + 2 H(+). It carries out the reaction N-hydroxy-L-tyrosine + reduced [NADPH--hemoprotein reductase] + O2 = N,N-dihydroxy-L-tyrosine + oxidized [NADPH--hemoprotein reductase] + H2O + H(+). It catalyses the reaction N,N-dihydroxy-L-tyrosine + H(+) = (E)-4-hydroxyphenylacetaldehyde oxime + CO2 + H2O. The protein operates within secondary metabolite biosynthesis; dhurrin biosynthesis; dhurrin from L-tyrosine: step 1/3. In terms of biological role, cytochrome P450 involved in the biosynthesis of the cyanogenic glucoside dhurrin. Catalyzes the conversion of L-tyrosine to p-hydroxyphenylacetaldehyde oxime, via the N-hydroxy-L-tyrosine and N,N-dihydroxy-L-tyrosine intermediates. Produces the (E) isomer of the final oxime product. This chain is Tyrosine N-monooxygenase (CYP79A1), found in Sorghum bicolor (Sorghum).